Here is a 100-residue protein sequence, read N- to C-terminus: uncharacterized protein (100 aa).

This is an uncharacterized protein from Saccharomyces cerevisiae (strain ATCC 204508 / S288c) (Baker's yeast).